Reading from the N-terminus, the 311-residue chain is Acetyl-coenzyme A carboxylase carboxyl transferase subunit alpha (311 aa).

In terms of domain architecture, CoA carboxyltransferase C-terminal spans 36–286 (NLSKEISKVY…ANYFISELAE (251 aa)).

This sequence belongs to the AccA family. As to quaternary structure, acetyl-CoA carboxylase is a heterohexamer composed of biotin carboxyl carrier protein (AccB), biotin carboxylase (AccC) and two subunits each of ACCase subunit alpha (AccA) and ACCase subunit beta (AccD).

The protein resides in the cytoplasm. The enzyme catalyses N(6)-carboxybiotinyl-L-lysyl-[protein] + acetyl-CoA = N(6)-biotinyl-L-lysyl-[protein] + malonyl-CoA. It participates in lipid metabolism; malonyl-CoA biosynthesis; malonyl-CoA from acetyl-CoA: step 1/1. Functionally, component of the acetyl coenzyme A carboxylase (ACC) complex. First, biotin carboxylase catalyzes the carboxylation of biotin on its carrier protein (BCCP) and then the CO(2) group is transferred by the carboxyltransferase to acetyl-CoA to form malonyl-CoA. This Campylobacter concisus (strain 13826) protein is Acetyl-coenzyme A carboxylase carboxyl transferase subunit alpha.